We begin with the raw amino-acid sequence, 711 residues long: Interferon-induced GTP-binding protein Mx2 (711 aa).

2 disordered regions span residues 1–26 (MPKPRMSWPYQRHRQASSPPHPHKEM) and 62–88 (MLTLSPQQPGGKSGQQTSKGPENNLYS). A compositionally biased stretch (low complexity) spans 66 to 82 (SPQQPGGKSGQQTSKGP). The Dynamin-type G domain occupies 112 to 383 (DLALPTIAVI…LIGHISKSLP (272 aa)). Positions 122–129 (GDQSSGKS) are G1 motif. 122–129 (GDQSSGKS) provides a ligand contact to GTP. Positions 147–149 (ITR) are G2 motif. The interval 221-224 (DLPG) is G3 motif. GTP contacts are provided by residues 221–225 (DLPGI) and 290–293 (TKPD). The G4 motif stretch occupies residues 290 to 293 (TKPD). Positions 322–325 (KCRG) are G5 motif. The 92-residue stretch at 619–710 (ITEIGVHVNA…TLSKFAQSLQ (92 aa)) folds into the GED domain.

Belongs to the TRAFAC class dynamin-like GTPase superfamily. Dynamin/Fzo/YdjA family. Ubiquitous.

Its subcellular location is the cytoplasm. It localises to the nucleus. Its function is as follows. Interferon-induced dynamin-like GTPase with antiviral activity against influenza virus A (FLUAV). This Sus scrofa (Pig) protein is Interferon-induced GTP-binding protein Mx2 (MX2).